The chain runs to 23 residues: Conotoxin Cl6c (23 aa).

Cystine bridges form between Cys2–Cys12, Cys5–Cys17, and Cys11–Cys21.

In terms of tissue distribution, expressed by the venom duct.

It is found in the secreted. In Californiconus californicus (California cone), this protein is Conotoxin Cl6c.